The sequence spans 1163 residues: Reticulon-4 (1163 aa).

Met1 bears the N-acetylmethionine mark. Disordered stretches follow at residues 1-184 and 244-270; these read MEDI…AASE and SAVS…RATN. At 1–989 the chain is on the cytoplasmic side; the sequence is MEDIDQSSLV…LYWRDIKKTG (989 aa). Phosphoserine is present on residues Ser7 and Ser16. A compositionally biased stretch (low complexity) spans 7-16; the sequence is SSLVSSSTDS. The segment covering 31-55 has biased composition (acidic residues); it reads EPEDEEDEEEEEDEEEDDEDLEELE. Residues 62-79 are compositionally biased toward low complexity; it reads AAGLSAAAVPPAAAAPLL. The segment covering 87 to 101 has biased composition (pro residues); it reads PPAPRGPLPAAPPAA. Ser107 carries the phosphoserine modification. Over residues 138–147 the composition is skewed to pro residues; it reads ARPPPPPPAG. 3 positions are modified to phosphoserine: Ser149, Ser169, and Ser171. A phosphoserine mark is found at Ser329, Ser333, and Ser343. Thr347 bears the Phosphothreonine mark. Positions 406–423 are enriched in basic and acidic residues; the sequence is DSLEQKSLGKDSEGRNED. 2 disordered regions span residues 406 to 437 and 454 to 474; these read DSLE…KDSS and TANT…DEKK. A Phosphoserine modification is found at Ser425. Thr429 bears the Phosphothreonine mark. Basic and acidic residues predominate over residues 461 to 474; that stretch reads LEDHTSENKTDEKK. Phosphoserine is present on residues Ser488, Ser689, Ser726, Ser766, and Ser830. Residue Thr832 is modified to Phosphothreonine. Residues Ser855, Ser922, and Ser962 each carry the phosphoserine modification. In terms of domain architecture, Reticulon spans 976 to 1163; it reads VVDLLYWRDI…KIPGLKRKAD (188 aa). The chain crosses the membrane as a helical span at residues 990–1010; it reads VVFGASLFLLLSLTVFSIVSV. At 1011–1104 the chain is on the lumenal side; that stretch reads TAYIALALLS…LMWVFTYVGA (94 aa). Lys1075 carries the post-translational modification N6-acetyllysine. A helical membrane pass occupies residues 1105–1125; it reads LFNGLTLLILALISLFSIPVI. The Cytoplasmic segment spans residues 1126-1163; that stretch reads YERHQVQIDHYLGLANKSVKDAMAKIQAKIPGLKRKAD.

In terms of assembly, binds to RTN4R. Interacts with ATL1. Interacts with TMEM170A. Interacts with RTN4IP1. As to quaternary structure, interacts in trans with CNTNAP1. Interacts with REEP5. Interacts with synaptic plasticity regulator PANTS; the interaction results in enhanced RTN4-mediated inhibition of AMPA receptor clustering. Interacts with GPR50. Homodimer. Interacts with BAD/Bcl-xl and BCL2. Interact with RTN3. Interacts with NGBR. Interacts with SPTLC1. Interacts with GRAMD4. Interacts with CDH5. Interacts with BACE1 and BACE2. Interacts with REEP5. Interacts with RETREG3. In terms of assembly, interacts with BACE1 and BACE2. Interacts with TMEM33. Isoforms A, B and C are present in optic nerve, spinal cord and cerebral cortex. Isoforms A and B are present in dorsal root ganglion, sciatic nerve and PC12 cells after longer exposure. Isoforms B and C are detected in kidney, cartilage, skin, lung and spleen. Isoform C is expressed at high level in skeletal muscle. In adult animals isoform A is expressed mainly in the nervous system.

It localises to the endoplasmic reticulum membrane. The protein resides in the cell membrane. Its subcellular location is the synapse. The protein localises to the cell junction. Functionally, required to induce the formation and stabilization of endoplasmic reticulum (ER) tubules. They regulate membrane morphogenesis in the ER by promoting tubular ER production. They influence nuclear envelope expansion, nuclear pore complex formation and proper localization of inner nuclear membrane proteins. However each isoform have specific functions mainly depending on their tissue expression specificities. Developmental neurite growth regulatory factor with a role as a negative regulator of axon-axon adhesion and growth, and as a facilitator of neurite branching. Regulates neurite fasciculation, branching and extension in the developing nervous system. Involved in down-regulation of growth, stabilization of wiring and restriction of plasticity in the adult CNS. Regulates the radial migration of cortical neurons via an RTN4R-LINGO1 containing receptor complex. Acts as a negative regulator of central nervous system angiogenesis. Inhibits spreading, migration and sprouting of primary brain microvascular endothelial cells (MVECs). Also induces the retraction of MVECs lamellipodia and filopodia in a ROCK pathway-dependent manner. Its function is as follows. Mainly function in endothelial cells and vascular smooth muscle cells, is also involved in immune system regulation. Modulator of vascular remodeling, promotes the migration of endothelial cells but inhibits the migration of vascular smooth muscle cells. Regulates endothelial sphingolipid biosynthesis with direct effects on vascular function and blood pressure. Inhibits serine palmitoyltransferase, SPTLC1, the rate-limiting enzyme of the novo sphingolipid biosynthetic pathway, thereby controlling production of endothelial sphingosine-1-phosphate (S1P). Required to promote macrophage homing and functions such as cytokine/chemokine gene expression involved in angiogenesis, arteriogenesis and tissue repair. Mediates ICAM1 induced transendothelial migration of leukocytes such as monocytes and neutrophils and acute inflammation. Necessary for immune responses triggered by nucleic acid sensing TLRs, such as TLR9, is required for proper TLR9 location to endolysosomes. Also involved in immune response to LPS. Plays a role in liver regeneration through the modulation of hepatocytes proliferation. Reduces the anti-apoptotic activity of Bcl-xl and Bcl-2. This is likely consecutive to their change in subcellular location, from the mitochondria to the endoplasmic reticulum, after binding and sequestration. With isoform C, inhibits BACE1 activity and amyloid precursor protein processing. In terms of biological role, regulates cardiomyocyte apoptosis upon hypoxic conditions. With isoform B, inhibits BACE1 activity and amyloid precursor protein processing. This is Reticulon-4 (Rtn4) from Rattus norvegicus (Rat).